Here is a 356-residue protein sequence, read N- to C-terminus: Pyrimidine monooxygenase RutA (356 aa).

Residues 49–50 (IK), Asn-115, Glu-124, 140–141 (RY), and Ser-190 each bind FMN.

The protein belongs to the NtaA/SnaA/DszA monooxygenase family. RutA subfamily.

It carries out the reaction uracil + FMNH2 + NADH + O2 = (Z)-3-ureidoacrylate + FMN + NAD(+) + H2O + H(+). The catalysed reaction is thymine + FMNH2 + NADH + O2 = (Z)-2-methylureidoacrylate + FMN + NAD(+) + H2O + H(+). Functionally, catalyzes the pyrimidine ring opening between N-3 and C-4 by an unusual flavin hydroperoxide-catalyzed mechanism, adding oxygen atoms in the process to yield ureidoacrylate peracid, that immediately reacts with FMN forming ureidoacrylate and FMN-N(5)-oxide. The FMN-N(5)-oxide reacts spontaneously with NADH to produce FMN. Requires the flavin reductase RutF to regenerate FMN in vivo. The sequence is that of Pyrimidine monooxygenase RutA from Haliangium ochraceum (strain DSM 14365 / JCM 11303 / SMP-2).